The following is a 630-amino-acid chain: Chaperone protein HtpG (630 aa).

The interval 1 to 339 is a; substrate-binding; that stretch reads MKGQETRGFQ…SNDLPLNVSR (339 aa). The tract at residues 340-555 is b; sequence EILQDNSITR…VDEMSTQMAK (216 aa). Residues 556-630 form a c region; it reads LFAAAGQQVP…MNQLLLSEKA (75 aa).

This sequence belongs to the heat shock protein 90 family. Homodimer.

Its subcellular location is the cytoplasm. Molecular chaperone. Has ATPase activity. This chain is Chaperone protein HtpG, found in Photorhabdus laumondii subsp. laumondii (strain DSM 15139 / CIP 105565 / TT01) (Photorhabdus luminescens subsp. laumondii).